We begin with the raw amino-acid sequence, 152 residues long: 17.1 kDa class II heat shock protein (152 aa).

The 117-residue stretch at 36–152 (DAKAMAATPA…KPKTIQVKVA (117 aa)) folds into the sHSP domain.

This sequence belongs to the small heat shock protein (HSP20) family.

It localises to the cytoplasm. The polypeptide is 17.1 kDa class II heat shock protein (HSP17.7) (Pisum sativum (Garden pea)).